Consider the following 744-residue polypeptide: Prestin (744 aa).

Topologically, residues 1–75 (MDHAEENEIP…PITKWLPAYK (75 aa)) are cytoplasmic. A helical transmembrane segment spans residues 76–104 (FKEYVLGDLVSGISTGVLQLPQGLAFAML). The Extracellular segment spans residues 105–108 (AAVP). Residues 109–126 (PVFGLYSSFYPVIMYCFF) form a helical membrane-spanning segment. Residues 127-137 (GTSRHISIGPF) are Cytoplasmic-facing. Residues 138–149 (AVISLMIGGVAV) form a helical membrane-spanning segment. Residues 150 to 168 (RLVPDDIVIPGGVNATNGT) are Extracellular-facing. The short motif at 158-168 (IPGGVNATNGT) is the Involved in motor function element. N-linked (GlcNAc...) asparagine glycosylation is found at Asn-163 and Asn-166. A helical membrane pass occupies residues 169–196 (EARDALRVKVAMSVTLLSGIIQFCLGVC). Residues 197–206 (RFGFVAIYLT) are Cytoplasmic-facing. Residues 207–230 (EPLVRGFTTAAAVHVFTSMLKYLF) form a helical membrane-spanning segment. The Extracellular segment spans residues 231 to 241 (GVKTKRYSGIF). The helical intramembrane region spans 242–253 (SVVYSTVAVLQN). Residues 254 to 258 (VKNLN) are Extracellular-facing. A helical transmembrane segment spans residues 259 to 276 (VCSLGVGLMVFGLLLGGK). Topologically, residues 277-291 (EFNERFKEKLPAPIP) are cytoplasmic. The chain crosses the membrane as a helical span at residues 292–307 (LEFFAVVMGTGISAGF). Topologically, residues 308 to 332 (NLHESYSVDVVGTLPLGLLPPANPD) are extracellular. Residues 333–359 (TSLFHLVYVDAIAIAIVGFSVTISMAK) traverse the membrane as a helical segment. Topologically, residues 360 to 370 (TLANKHGYQVD) are cytoplasmic. A helical transmembrane segment spans residues 371–388 (GNQELIALGICNSIGSLF). The Extracellular segment spans residues 389–396 (QTFSISCS). The helical transmembrane segment at 397–406 (LSRSLVQEGT) threads the bilayer. Position 398 (Ser-398) interacts with salicylate. The Cytoplasmic segment spans residues 407–410 (GGKT). The helical transmembrane segment at 411–431 (QLAGCLASLMILLVILATGFL) threads the bilayer. The Extracellular portion of the chain corresponds to 432 to 436 (FESLP). Residues 437-464 (QAVLSAIVIVNLKGMFMQFSDLPFFWRT) form a helical membrane-spanning segment. A topological domain (cytoplasmic) is located at residue Ser-465. The helical transmembrane segment at 466–481 (KIELTIWLTTFVSSLF) threads the bilayer. The Extracellular segment spans residues 482-484 (LGL). Residues 485–504 (DYGLITAVIIALLTVIYRTQ) traverse the membrane as a helical segment. The segment at 505–718 (SPSYTVLGQL…AVLGSQVREA (214 aa)) is extended region for STAS domain. Residues 505 to 744 (SPSYTVLGQL…PNATPTTPEA (240 aa)) lie on the Cytoplasmic side of the membrane. The region spanning 525–713 (AYEEVKEIPG…HSIHDAVLGS (189 aa)) is the STAS domain. The interval 720–744 (AEQETTVLPPQEDMEPNATPTTPEA) is disordered.

This sequence belongs to the SLC26A/SulP transporter (TC 2.A.53) family. As to quaternary structure, homodimer. Interacts (via STAS domain) with CALM; this interaction is calcium-dependent and the STAS domain interacts with only one lobe of CALM which is an elongated conformation. Interacts with MYH1. As to expression, specifically expressed in outer hair cells of cochleae (at protein level). Not detected in other cells of the organ of Corti.

Its subcellular location is the lateral cell membrane. The catalysed reaction is 2 hydrogencarbonate(in) + chloride(out) = 2 hydrogencarbonate(out) + chloride(in). Salicylate, an inhibitor of outer hair cell motility, acts as a competitive antagonist at the prestin anion-binding site. In terms of biological role, voltage-sensitive motor protein that drives outer hair cell (OHC) electromotility (eM) and participates in sound amplification in the hearing organ. Converts changes in the transmembrane electric potential into mechanical displacements resulting in the coupling of its expansion to movement of a charged voltage sensor across the lipid membrane. The nature of the voltage sensor is not completely clear, and two models compete. In the first model, acts as an incomplete transporter where intracellular chloride anion acts as extrinsic voltage sensor that drives conformational change in the protein which is sufficient to produce a length change in the plane of the membrane and hence in the length of the OHC. The second model in which multiple charged amino acid residues are distributed at the intracellular and extracellular membrane interfaces that form an intrinsic voltage sensor, whose movement produces the non-linear capacitance (NLC). However, the effective voltage sensor may be the result of a hybrid voltage sensor assembled from intrinsic charge (charged residues) and extrinsic charge (bound anion). Notably, binding of anions to the anion-binding pocket partially neutralizes the intrinsic positive charge rather than to form an electrically negative sensor, therefore remaining charge may serve as voltage sensor that, after depolarization, moves from down (expanded state) to up (contracted) conformation, which is accompanied by an eccentric contraction of the intermembrane cross-sectional area of the protein as well as a major increase in the hydrophobic thickness of the protein having as consequences the plasma membrane thickening and the cell contraction after membrane depolarization. The anion-binding pocket transits from the inward-open (Down) state, where it is exposed toward the intracellular solvent in the absence of anion, to the occluded (Up) state upon anion binding. Salicylate competes for the anion-binding site and inhibits the voltage-sensor movement, and therefore inhibits the charge transfer and electromotility by displacing Cl(-) from the anion-binding site and by preventing the structural transitions to the contracted state. In addition, can act as a weak Cl(-)/HCO3(-) antiporter across the cell membrane and so regulate the intracellular pH of the outer hair cells (OHCs), while firstly found as being unable to mediate electrogenic anion transport. Moreover, supports a role in cardiac mechanical amplification serving as an elastic element to enhance the actomyosin- based sarcomere contraction system. In Rattus norvegicus (Rat), this protein is Prestin.